A 282-amino-acid chain; its full sequence is Large ribosomal subunit protein uL2 (282 aa).

Positions 223 to 282 (TVRGSVMNPNDHPHGGGEGRAPIGRKSPVTPWGKKALGVKTRNTKKTSEKLIVRKRSNKK) are disordered.

The protein belongs to the universal ribosomal protein uL2 family. Part of the 50S ribosomal subunit. Forms a bridge to the 30S subunit in the 70S ribosome.

Its function is as follows. One of the primary rRNA binding proteins. Required for association of the 30S and 50S subunits to form the 70S ribosome, for tRNA binding and peptide bond formation. It has been suggested to have peptidyltransferase activity; this is somewhat controversial. Makes several contacts with the 16S rRNA in the 70S ribosome. The chain is Large ribosomal subunit protein uL2 from Mycoplasma mycoides subsp. mycoides SC (strain CCUG 32753 / NCTC 10114 / PG1).